The following is a 117-amino-acid chain: Minor capsid protein p17 (117 aa).

N-linked (GlcNAc...) asparagine; by host glycosylation occurs at N12. Residues A39 to Y59 form a helical membrane-spanning segment. N-linked (GlcNAc...) asparagine; by host glycans are attached at residues N61 and N97.

The protein belongs to the asfivirus minor capsid protein p17 family. In terms of assembly, interacts with the minor capsid protein M1249L and with the hexon capsid protein p72 capsomers; these interactions form a rigid zipper structure that stabilizes the capsomers. Interacts with host STING1.

It is found in the virion membrane. Its subcellular location is the host endoplasmic reticulum membrane. The protein resides in the host Golgi apparatus membrane. Functionally, together with the penton and the other minor capsid proteins (M1249L, p49), forms a complicated network immediately below the outer capsid shell, stabilizing the whole capsid. Three copies of p17 encircle each p72 capsomer in the inner capsid shell, anchoring p72 capsomers on the inner membrane. Required for the assembly of the capsid and icosahedral morphogenesis. Additionally, inhibits the host cGAS-STING pathway through its interaction with STING1 and subsequent interference of the recruitment of downstream components TBK1 and IKBKE. The sequence is that of Minor capsid protein p17 from African swine fever virus (strain Badajoz 1971 Vero-adapted) (Ba71V).